The primary structure comprises 342 residues: Ribosomal RNA small subunit methyltransferase C (342 aa).

Belongs to the methyltransferase superfamily. RsmC family. As to quaternary structure, monomer.

The protein resides in the cytoplasm. It catalyses the reaction guanosine(1207) in 16S rRNA + S-adenosyl-L-methionine = N(2)-methylguanosine(1207) in 16S rRNA + S-adenosyl-L-homocysteine + H(+). Its function is as follows. Specifically methylates the guanine in position 1207 of 16S rRNA in the 30S particle. The sequence is that of Ribosomal RNA small subunit methyltransferase C from Shewanella oneidensis (strain ATCC 700550 / JCM 31522 / CIP 106686 / LMG 19005 / NCIMB 14063 / MR-1).